A 507-amino-acid polypeptide reads, in one-letter code: Phosphoenolpyruvate carboxylase (507 aa).

The segment at 1-25 (MHKIDRKIPNIMGTQHPDNAGVPFF) is disordered.

Belongs to the PEPCase type 2 family. As to quaternary structure, homotetramer. Mg(2+) is required as a cofactor.

It catalyses the reaction oxaloacetate + phosphate = phosphoenolpyruvate + hydrogencarbonate. Catalyzes the irreversible beta-carboxylation of phosphoenolpyruvate (PEP) to form oxaloacetate (OAA), a four-carbon dicarboxylic acid source for the tricarboxylic acid cycle. In Oenococcus oeni (strain ATCC BAA-331 / PSU-1), this protein is Phosphoenolpyruvate carboxylase.